We begin with the raw amino-acid sequence, 611 residues long: Procollagen galactosyltransferase 1-A (611 aa).

The N-terminal stretch at 1 to 24 is a signal peptide; it reads MSQAGVDRLLRGLQLLLLVLRLSA. N-linked (GlcNAc...) asparagine glycosylation is found at asparagine 85, asparagine 173, asparagine 312, asparagine 370, and asparagine 568. The span at 575–591 shows a compositional bias: basic and acidic residues; sequence WDRAKSRKTQQQEKLRS. A disordered region spans residues 575–611; that stretch reads WDRAKSRKTQQQEKLRSEALNSPSLGSPFDNTARDEL. The short motif at 608–611 is the Prevents secretion from ER element; the sequence is RDEL.

The protein belongs to the glycosyltransferase 25 family.

The protein resides in the endoplasmic reticulum lumen. The catalysed reaction is (5R)-5-hydroxy-L-lysyl-[collagen] + UDP-alpha-D-galactose = (5R)-5-O-(beta-D-galactosyl)-5-hydroxy-L-lysyl-[collagen] + UDP + H(+). Beta-galactosyltransferase that transfers beta-galactose to hydroxylysine residues of type I collagen. By acting on collagen glycosylation, facilitates the formation of collagen triple helix. The chain is Procollagen galactosyltransferase 1-A (colgalt1-a) from Xenopus laevis (African clawed frog).